The following is a 295-amino-acid chain: Alpha-ketoglutarate-dependent sulfate ester dioxygenase (295 aa).

Histidine 71 is a binding site for substrate. Histidine 98 and aspartate 100 together coordinate Fe cation. Valine 101 lines the substrate pocket. Threonine 125 is a 2-oxoglutarate binding site. Histidine 252 provides a ligand contact to Fe cation. 2 residues coordinate 2-oxoglutarate: arginine 263 and arginine 267.

It belongs to the TfdA dioxygenase family. Requires Fe(2+) as cofactor.

The catalysed reaction is a primary linear alkyl sulfate ester + 2-oxoglutarate + O2 = an aldehyde + sulfate + succinate + CO2 + H(+). The enzyme catalyses 2-ethylhexyl sulfate + 2-oxoglutarate + O2 = 2-ethylhexanal + sulfate + succinate + CO2 + H(+). It carries out the reaction hexyl sulfate + 2-oxoglutarate + O2 = hexanal + sulfate + succinate + CO2 + H(+). It catalyses the reaction pentyl sulfate + 2-oxoglutarate + O2 = pentanal + sulfate + succinate + CO2 + H(+). The catalysed reaction is heptyl sulfate + 2-oxoglutarate + O2 = heptanal + sulfate + succinate + CO2 + H(+). Its function is as follows. Alpha-ketoglutarate-dependent sulfate ester dioxygenase, which oxidizes medium-chain alkyl-sulfate esters. Shows preference for 2-ethylhexyl sulfate (2-EHS) in vitro, leading to the formation of succinate and 2-ethylhexanal. Has likely a role in sulfate scavenging in vivo. Also causes the inactivation of the 2-carboxyquinoxaline Ty38c (an antitubercular compound that inhibits DprE1) via oxidative decarboxylation, using Ty38c instead of alpha-ketoglutarate as a substrate. Is thus responsible for primary resistance of M.tuberculosis to Ty38c in vitro. Overexpression of Rv3406 causes resistance to Ty38c. The sequence is that of Alpha-ketoglutarate-dependent sulfate ester dioxygenase from Mycobacterium tuberculosis (strain ATCC 25618 / H37Rv).